The sequence spans 318 residues: SPX domain-containing protein 4 (318 aa).

The 187-residue stretch at 1 to 187 (MKFGKEFRTH…GGLLRLPFTQ (187 aa)) folds into the SPX domain. The segment covering 226–237 (SAVQAHSSSHQH) has biased composition (low complexity). Disordered regions lie at residues 226–247 (SAVQAHSSSHQHNSPRISAETS) and 284–318 (SSLLQNEDDETVTAENSPNSGNKDDSEKEDTGPSH). Over residues 305–318 (NKDDSEKEDTGPSH) the composition is skewed to basic and acidic residues.

This chain is SPX domain-containing protein 4 (SPX4), found in Arabidopsis thaliana (Mouse-ear cress).